Reading from the N-terminus, the 473-residue chain is Aspartyl aminopeptidase 1 (473 aa).

His93 is a binding site for Zn(2+). His168 provides a ligand contact to substrate. Residues Asp262, Glu298, Glu299, and Asp343 each contribute to the Zn(2+) site. Residue Glu298 participates in substrate binding. The substrate site is built by Asp343, His346, Lys371, and Tyr378. His437 lines the Zn(2+) pocket.

It belongs to the peptidase M18 family. Tetrahedron-shaped homododecamer built from six homodimers. Interacts with autophagy receptor Nbr1. The cofactor is Zn(2+).

It is found in the cytoplasm. The protein localises to the vacuole lumen. The enzyme catalyses Release of an N-terminal aspartate or glutamate from a peptide, with a preference for aspartate.. In terms of biological role, aspartyl aminopeptidase that is able to remove aspartyl residue at N-terminus of angiotensin I. Also acts as a chaperone and efficiently suppressed the thermal aggregation of citrate synthase. This chain is Aspartyl aminopeptidase 1 (ape4), found in Schizosaccharomyces pombe (strain 972 / ATCC 24843) (Fission yeast).